Reading from the N-terminus, the 163-residue chain is uncharacterized protein (163 aa).

Transmembrane regions (helical) follow at residues 7–27 (YLNEIWLIIGIICILVECYIV) and 51–71 (LVIFTLTNQITFFGLFSLVWF).

The protein resides in the cell membrane. This is an uncharacterized protein from Rickettsia prowazekii (strain Madrid E).